The primary structure comprises 220 residues: Protein-L-isoaspartate O-methyltransferase (220 aa).

Ser-68 is an active-site residue.

Belongs to the methyltransferase superfamily. L-isoaspartyl/D-aspartyl protein methyltransferase family.

Its subcellular location is the cytoplasm. The catalysed reaction is [protein]-L-isoaspartate + S-adenosyl-L-methionine = [protein]-L-isoaspartate alpha-methyl ester + S-adenosyl-L-homocysteine. Functionally, catalyzes the methyl esterification of L-isoaspartyl residues in peptides and proteins that result from spontaneous decomposition of normal L-aspartyl and L-asparaginyl residues. It plays a role in the repair and/or degradation of damaged proteins. This Dictyoglomus thermophilum (strain ATCC 35947 / DSM 3960 / H-6-12) protein is Protein-L-isoaspartate O-methyltransferase.